The primary structure comprises 194 residues: Holliday junction branch migration complex subunit RuvA (194 aa).

The tract at residues methionine 1–lysine 62 is domain I. The segment at threonine 63–aspartate 136 is domain II. Residues aspartate 136–proline 140 are flexible linker. The segment at leucine 141 to serine 194 is domain III.

It belongs to the RuvA family. As to quaternary structure, homotetramer. Forms an RuvA(8)-RuvB(12)-Holliday junction (HJ) complex. HJ DNA is sandwiched between 2 RuvA tetramers; dsDNA enters through RuvA and exits via RuvB. An RuvB hexamer assembles on each DNA strand where it exits the tetramer. Each RuvB hexamer is contacted by two RuvA subunits (via domain III) on 2 adjacent RuvB subunits; this complex drives branch migration. In the full resolvosome a probable DNA-RuvA(4)-RuvB(12)-RuvC(2) complex forms which resolves the HJ.

The protein resides in the cytoplasm. Functionally, the RuvA-RuvB-RuvC complex processes Holliday junction (HJ) DNA during genetic recombination and DNA repair, while the RuvA-RuvB complex plays an important role in the rescue of blocked DNA replication forks via replication fork reversal (RFR). RuvA specifically binds to HJ cruciform DNA, conferring on it an open structure. The RuvB hexamer acts as an ATP-dependent pump, pulling dsDNA into and through the RuvAB complex. HJ branch migration allows RuvC to scan DNA until it finds its consensus sequence, where it cleaves and resolves the cruciform DNA. In Halothermothrix orenii (strain H 168 / OCM 544 / DSM 9562), this protein is Holliday junction branch migration complex subunit RuvA.